Reading from the N-terminus, the 561-residue chain is Oxygen-dependent choline dehydrogenase (561 aa).

Position 6–35 (6–35) interacts with FAD; it reads DYIIIGAGSAGNVLATRLTEDADVSVLLLE. Residue H475 is the Proton acceptor of the active site.

Belongs to the GMC oxidoreductase family. Requires FAD as cofactor.

The enzyme catalyses choline + A = betaine aldehyde + AH2. The catalysed reaction is betaine aldehyde + NAD(+) + H2O = glycine betaine + NADH + 2 H(+). Its pathway is amine and polyamine biosynthesis; betaine biosynthesis via choline pathway; betaine aldehyde from choline (cytochrome c reductase route): step 1/1. Its function is as follows. Involved in the biosynthesis of the osmoprotectant glycine betaine. Catalyzes the oxidation of choline to betaine aldehyde and betaine aldehyde to glycine betaine at the same rate. The sequence is that of Oxygen-dependent choline dehydrogenase from Pseudomonas aeruginosa (strain LESB58).